Consider the following 156-residue polypeptide: MNDAVKLNSIFTKLSKKKKPKLLGRGIGCGKGKTSGRGHKGQKARSGVSINGFEGGQQSIYTRLPKRGFKPIRKNLYSIFNVGDVQCLMEAKKIVKDSIIDKELLHKLGFIRSVKSKIKLLNKGKLREKFVFHVDFASEAAKRSVASVGGSVEILS.

The interval 25 to 48 (RGIGCGKGKTSGRGHKGQKARSGV) is disordered. Positions 34-43 (TSGRGHKGQK) are enriched in basic residues.

This sequence belongs to the universal ribosomal protein uL15 family. In terms of assembly, part of the 50S ribosomal subunit.

Binds to the 23S rRNA. This Wolbachia pipientis subsp. Culex pipiens (strain wPip) protein is Large ribosomal subunit protein uL15.